Reading from the N-terminus, the 38-residue chain is Large ribosomal subunit protein bL36 (38 aa).

Belongs to the bacterial ribosomal protein bL36 family.

In Limosilactobacillus fermentum (strain NBRC 3956 / LMG 18251) (Lactobacillus fermentum), this protein is Large ribosomal subunit protein bL36.